Here is a 374-residue protein sequence, read N- to C-terminus: C-C chemokine receptor type 2 (374 aa).

Residues 1 to 42 (MLSTSRSRFIRNTNESGEEVTTFFDYDYGAPCHKFDVKQIGA) lie on the Extracellular side of the membrane. N-linked (GlcNAc...) asparagine glycosylation is present at Asn-14. Tyr-26 is modified (sulfotyrosine). Residues 43–70 (QLLPPLYSLVFIFGFVGNMLVVLILINC) traverse the membrane as a helical segment. Residues 71–80 (KKLKCLTDIY) lie on the Cytoplasmic side of the membrane. A helical membrane pass occupies residues 81-100 (LLNLAISDLLFLITLPLWAH). The Extracellular segment spans residues 101 to 114 (SAANEWVFGNAMCK). Cys-113 and Cys-190 form a disulfide bridge. The helical transmembrane segment at 115-136 (LFTGLYHIGYFGGIFFIILLTI) threads the bilayer. The Cytoplasmic segment spans residues 137–153 (DRYLAIVHAVFALKART). Phosphotyrosine; by JAK2 is present on Tyr-139. The helical transmembrane segment at 154–178 (VTFGVVTSVITWLVAVFASVPGIIF) threads the bilayer. Over 179-206 (TKCQKEDSVYVCGPYFPRGWNNFHTIMR) the chain is Extracellular. The helical transmembrane segment at 207–226 (NILGLVLPLLIMVICYSGIL) threads the bilayer. Over 227–243 (KTLLRCRNEKKRHRAVR) the chain is Cytoplasmic. Residues 244–268 (VIFTIMIVYFLFWTPYNIVILLNTF) traverse the membrane as a helical segment. Residues 269 to 285 (QEFFGLSNCESTSQLDQ) lie on the Extracellular side of the membrane. Residues 286-309 (ATQVTETLGMTHCCINPIIYAFVG) form a helical membrane-spanning segment. Topologically, residues 310 to 374 (EKFRSLFHIA…EASLQDKEGA (65 aa)) are cytoplasmic. Residues 348–374 (QGLLDGRGKGKSIGRAPEASLQDKEGA) are disordered.

The protein belongs to the G-protein coupled receptor 1 family. As to quaternary structure, interacts with ARRB1. Interacts (via extracellular N-terminal region) with beta-defensin DEFB106A/DEFB106B; this interaction may preferentially require specific tyrosine sulfation on CCR2. Interacts with NUP85; the interaction is required for CCR2 clusters formation on the cell membrane and CCR2 signaling. In terms of assembly, (Microbial infection) Binds to HIV-1 Tat. In terms of processing, N-glycosylated. Post-translationally, sulfation increases the affinity for both monomeric and dimeric CCL2 with stronger binding to the monomeric form. Binding of sulfated CCR2 to CCL2 promotes conversion of CCL2 from dimer to monomer. In terms of tissue distribution, expressed by monocytes and IL2-activated NK cells. Abundantly expressed on CD14+/CD16- monocytes and weakly on CD14+/CD16+ monocytes, type 2 dendritic cells (DCs) and plasmacytoid DCs (at protein level).

Its subcellular location is the cell membrane. In terms of biological role, key functional receptor for CCL2 but can also bind CCL7, and CCL12. Also transduces signaling mediated by CCL13. Its binding with CCL2 on monocytes and macrophages mediates chemotaxis and migration induction through the activation of the PI3K cascade, the small G protein Rac and lamellipodium protrusion. Also acts as a receptor for the beta-defensin DEFB106A/DEFB106B. Regulates the expression of T-cell inflammatory cytokines and T-cell differentiation, promoting the differentiation of T-cells into T-helper 17 cells (Th17) during inflammation. Facilitates the export of mature thymocytes by enhancing directional movement of thymocytes to sphingosine-1-phosphate stimulation and up-regulation of S1P1R expression; signals through the JAK-STAT pathway to regulate FOXO1 activity leading to an increased expression of S1P1R. Plays an important role in mediating peripheral nerve injury-induced neuropathic pain. Increases NMDA-mediated synaptic transmission in both dopamine D1 and D2 receptor-containing neurons, which may be caused by MAPK/ERK-dependent phosphorylation of GRIN2B/NMDAR2B. Mediates the recruitment of macrophages and monocytes to the injury site following brain injury. Its function is as follows. (Microbial infection) Alternative coreceptor with CD4 for HIV-1 infection. This Homo sapiens (Human) protein is C-C chemokine receptor type 2 (CCR2).